We begin with the raw amino-acid sequence, 107 residues long: Quaternary ammonium compound-resistance protein QacG (107 aa).

4 helical membrane-spanning segments follow: residues Met-1–Lys-21, Phe-26–Leu-46, Ile-57–Val-77, and Leu-84–Gly-104.

The protein belongs to the drug/metabolite transporter (DMT) superfamily. Small multidrug resistance (SMR) (TC 2.A.7.1) family.

It localises to the cell membrane. Its function is as follows. Multidrug exporter. Is implicated for the resistance to bacteriocidal quaternary ammonium compounds. This Staphylococcus sp. (strain ST94) protein is Quaternary ammonium compound-resistance protein QacG (qacG).